Here is a 385-residue protein sequence, read N- to C-terminus: HAT1-interacting factor 1 (385 aa).

The important for interaction with heterotetrameric histone H3 and H4 and for interaction with dimeric histone H2A and H2B stretch occupies residues 80 to 199 (GNLFGDALLA…RKSGFHIYFE (120 aa)). 2 stretches are compositionally biased toward low complexity: residues 85–97 (DALLAGDDGSGSE) and 105–116 (DVSNGEEGNENG). The segment at 85 to 163 (DALLAGDDGS…EEENVEKEEE (79 aa)) is disordered. Residues 129-160 (DQEEEDLTGDVDSGDSEDSGEGSEEEEENVEK) are compositionally biased toward acidic residues. Serine 174 bears the Phosphoserine mark. TPR repeat units lie at residues 186–220 (VSQLRKSGFHIYFENDLYENALDLLAQALMLLGRP), 229–262 (ENSRLRIGDVYILMGDIEREAEMFSRAIHHYLKA), and 289–322 (ALRWVDQVPAKDKLKRFKHAKALLEKHMTTRPKD). The segment at 248-332 (EAEMFSRAIH…SELQQARLAQ (85 aa)) is interaction with dimeric histone H2A and H2B. Positions 340-385 (VQENQQHGSKRPLSQPTTSIGFPALEKPLGDFNDLSQLVKKKPRRH) are disordered. A compositionally biased stretch (polar residues) spans 342 to 359 (ENQQHGSKRPLSQPTTSI).

It belongs to the NASP family. In terms of assembly, homodimer. The homodimer interacts with a histone tetramer containing H3 and H4; the interaction is direct. The homodimer interacts with heterodimeric histone H2A and H2B; the interaction is direct. Component of the nuclear histone acetyltransferase B (HAT-B) complex composed of at least HAT1, HAT2 and HIF1. Does not interact with HAT1 in the absence of HAT2. Interacts with histones H3 and H4 in a HAT1/HAT2 dependent manner. Interaction with heterotetrameric histone H3 and H4 precludes interaction with dimeric histone H2A and H2B, irrespective of the fact that their binding involves non-identical regions of the protein.

The protein resides in the nucleus. Its function is as follows. Histone H3 and H4 specific chaperone component of the nuclear histone acetyltransferase B (HAT-B) complex. Involved in chromatin assembly and telomere silencing. In Saccharomyces cerevisiae (strain ATCC 204508 / S288c) (Baker's yeast), this protein is HAT1-interacting factor 1 (HIF1).